The following is a 216-amino-acid chain: Probable nicotinate-nucleotide adenylyltransferase (216 aa).

This sequence belongs to the NadD family.

The enzyme catalyses nicotinate beta-D-ribonucleotide + ATP + H(+) = deamido-NAD(+) + diphosphate. Its pathway is cofactor biosynthesis; NAD(+) biosynthesis; deamido-NAD(+) from nicotinate D-ribonucleotide: step 1/1. Catalyzes the reversible adenylation of nicotinate mononucleotide (NaMN) to nicotinic acid adenine dinucleotide (NaAD). This is Probable nicotinate-nucleotide adenylyltransferase from Desulfatibacillum aliphaticivorans.